The following is an 87-amino-acid chain: Small ribosomal subunit protein uS17 (87 aa).

The protein belongs to the universal ribosomal protein uS17 family. In terms of assembly, part of the 30S ribosomal subunit.

Functionally, one of the primary rRNA binding proteins, it binds specifically to the 5'-end of 16S ribosomal RNA. The sequence is that of Small ribosomal subunit protein uS17 from Dichelobacter nodosus (strain VCS1703A).